The following is a 268-amino-acid chain: Hydroxyethylthiazole kinase (268 aa).

Substrate is bound at residue Met49. Lys124 and Thr168 together coordinate ATP. Residue Ala195 coordinates substrate.

It belongs to the Thz kinase family. Mg(2+) is required as a cofactor.

It carries out the reaction 5-(2-hydroxyethyl)-4-methylthiazole + ATP = 4-methyl-5-(2-phosphooxyethyl)-thiazole + ADP + H(+). It functions in the pathway cofactor biosynthesis; thiamine diphosphate biosynthesis; 4-methyl-5-(2-phosphoethyl)-thiazole from 5-(2-hydroxyethyl)-4-methylthiazole: step 1/1. Its function is as follows. Catalyzes the phosphorylation of the hydroxyl group of 4-methyl-5-beta-hydroxyethylthiazole (THZ). This is Hydroxyethylthiazole kinase from Archaeoglobus fulgidus (strain ATCC 49558 / DSM 4304 / JCM 9628 / NBRC 100126 / VC-16).